A 689-amino-acid chain; its full sequence is Armadillo-like helical domain-containing protein 3 (689 aa).

A helical transmembrane segment spans residues 520–538 (IFQLALQVVNLFNMFITYG).

The protein belongs to the ARMH3 family.

Its subcellular location is the golgi apparatus membrane. The protein resides in the cytoplasm. May be involved in Golgi maintenance and protein secretion. The protein is Armadillo-like helical domain-containing protein 3 of Danio rerio (Zebrafish).